An 86-amino-acid chain; its full sequence is Kunitz-type conkunitzin-S1 (86 aa).

Positions 1-26 are cleaved as a signal peptide; that stretch reads MEGRRFAAVLILTICMLAPGTGTLLP. Positions 33 to 83 constitute a BPTI/Kunitz inhibitor domain; that stretch reads CDLPADSGSGTKAEKRIYYNSARKQCLRFDYTGQGGNENNFRRTYDCQRTC. 2 disulfide bridges follow: C33/C83 and C58/C79. The residue at position 86 (T86) is a Threonine amide.

It belongs to the venom Kunitz-type family. Post-translationally, contains 2 disulfide bonds instead of 3, as for all Kunitz domain proteins. A double Cys-mutant carrying an additional Cys bridge does not show difference in activity with the natural peptide. However, there are some differences in the kinetics of binding of both peptides to the channel. As to expression, expressed by the venom duct.

It localises to the secreted. Functionally, blocks specifically voltage-activated potassium channels (Kv) of the Shaker family (IC(50)=1.33 nM). The chain is Kunitz-type conkunitzin-S1 from Conus striatus (Striated cone).